The primary structure comprises 30 residues: Acyl-CoA-binding protein 1 (30 aa).

Residues 1–15 (ALKDEFEEHAEKAKT) show a composition bias toward basic and acidic residues. Residues 1–30 (ALKDEFEEHAEKAKTLPENTSNENKLILYG) form a disordered region. The region spanning 2–30 (LKDEFEEHAEKAKTLPENTSNENKLILYG) is the ACB domain.

Belongs to the ACBP family.

The protein resides in the cytoplasm. Its function is as follows. Binds medium- and long-chain acyl-CoA esters with very high affinity and may function as an intracellular carrier of acyl-CoA esters. The chain is Acyl-CoA-binding protein 1 from Digitalis lanata (Grecian foxglove).